The sequence spans 226 residues: Transmembrane protein 204 (226 aa).

Over 1–5 (MTVQR) the chain is Cytoplasmic. Residues 6 to 26 (LVAAAVLVALVSLILNNVAAF) traverse the membrane as a helical segment. The Extracellular portion of the chain corresponds to 27–103 (TSNWVCQTLE…LQFDMMRACN (77 aa)). Residues 104 to 124 (LVATAALTAGQLTFLLGLVGL) traverse the membrane as a helical segment. Topologically, residues 125–136 (PLLSPDAPCWEE) are cytoplasmic. A helical transmembrane segment spans residues 137–157 (AMAAAFQLASFVLVIGLVTFY). The Extracellular segment spans residues 158 to 170 (RIGPYTNLSWSCY). N164 carries an N-linked (GlcNAc...) asparagine glycan. A helical membrane pass occupies residues 171-191 (LNIGACLLATLAAAMLIWNIL). Topologically, residues 192-226 (HKREDCMAPRVIVISRSLTARFRRGLDNDYVESPC) are cytoplasmic.

As to expression, highly expressed in lung, heart, kidney and placenta. Lower expression in thymus, spleen, liver, testis and ovary. Expressed in endothelial and restricted epithelial cell populations.

It is found in the cell junction. It localises to the adherens junction. The protein resides in the cell membrane. Its function is as follows. Can influence paracellular permeability. Appears to be involved in cell-cell interactions through adherens. The sequence is that of Transmembrane protein 204 (TMEM204) from Homo sapiens (Human).